The sequence spans 316 residues: Homoserine kinase (316 aa).

97 to 107 is a binding site for ATP; that stretch reads PPARGLGSSAS.

This sequence belongs to the GHMP kinase family. Homoserine kinase subfamily.

Its subcellular location is the cytoplasm. The enzyme catalyses L-homoserine + ATP = O-phospho-L-homoserine + ADP + H(+). It participates in amino-acid biosynthesis; L-threonine biosynthesis; L-threonine from L-aspartate: step 4/5. In terms of biological role, catalyzes the ATP-dependent phosphorylation of L-homoserine to L-homoserine phosphate. The chain is Homoserine kinase from Prochlorococcus marinus (strain MIT 9303).